The chain runs to 1113 residues: StAR-related lipid transfer protein 13 (1113 aa).

N-acetylmethionine is present on M1. The SAM domain occupies 55–122 (QQEIEAKEAC…LNKCASMKLD (68 aa)). Disordered stretches follow at residues 162 to 254 (LLPR…PTRA) and 307 to 346 (PNGD…VSTP). Positions 177–188 (MRNTTSSESVLT) are enriched in polar residues. Composition is skewed to low complexity over residues 197 to 213 (SIHS…SQPG) and 326 to 344 (SGKS…SGVS). The residue at position 411 (S411) is a Phosphoserine. The span at 536 to 549 (FEGNSVSEGRTTPS) shows a compositional bias: polar residues. The disordered stretch occupies residues 536 to 580 (FEGNSVSEGRTTPSDVERDVTSLNESEPPGVRDRRDSGVGASLTR). In terms of domain architecture, Rho-GAP spans 663 to 868 (VPLIVHVQRT…HMIMECDRLF (206 aa)). In terms of domain architecture, START spans 899-1107 (LEESGATFHT…RNSFQPLIAE (209 aa)).

Homodimer. Interacts with TAX1BP1. Ubiquitously expressed. Underexpressed in hepatocellular carcinoma cells and some breast cancer cell lines.

The protein localises to the cytoplasm. The protein resides in the membrane. Its subcellular location is the mitochondrion membrane. It is found in the lipid droplet. Its function is as follows. GTPase-activating protein for RhoA, and perhaps for Cdc42. May be involved in regulation of cytoskeletal reorganization, cell proliferation and cell motility. Acts a tumor suppressor in hepatocellular carcinoma cells. This is StAR-related lipid transfer protein 13 (STARD13) from Homo sapiens (Human).